The primary structure comprises 295 residues: Acetaldehyde dehydrogenase (295 aa).

Position 11-14 (11-14 (SGNI)) interacts with NAD(+). Cys-127 functions as the Acyl-thioester intermediate in the catalytic mechanism. NAD(+) contacts are provided by residues 158–166 (SAGPGTRAN) and Asn-270.

The protein belongs to the acetaldehyde dehydrogenase family.

The catalysed reaction is acetaldehyde + NAD(+) + CoA = acetyl-CoA + NADH + H(+). This is Acetaldehyde dehydrogenase (nbaJ) from Geobacillus thermodenitrificans (strain NG80-2).